Reading from the N-terminus, the 69-residue chain is Toxin CSTX-11 (69 aa).

Disulfide bonds link cysteine 6-cysteine 21, cysteine 13-cysteine 30, cysteine 20-cysteine 47, and cysteine 32-cysteine 45.

In terms of tissue distribution, expressed by the venom gland.

It is found in the secreted. It localises to the target cell membrane. Spider venom toxin that shows calcium channel blocking activity and exhibits cytolytic activity by affecting the outer leaflet curvature and/or pore formation across the membrane. It blocks L-type calcium channels (Cav1/CACNA1) in mammalian neurons at nanomolar concentrations. Furthermore, it produces a slow voltage-independent block of mid/low and high voltage-activated calcium channels in cockroach neurons. Potassium ions, histamine, M-ctenitoxin-Cs1a (AC P83619), CSTX-9 (AC P58604), and CSTX-13 (AC P83919) synergistically increase the insecticidal activity of this toxin. In vivo, it causes paralysis in blow flies and provokes death in drosophila. In Cupiennius salei (American wandering spider), this protein is Toxin CSTX-11.